A 70-amino-acid chain; its full sequence is Large ribosomal subunit protein bL31 (70 aa).

Positions 16, 18, 37, and 40 each coordinate Zn(2+).

The protein belongs to the bacterial ribosomal protein bL31 family. Type A subfamily. As to quaternary structure, part of the 50S ribosomal subunit. Zn(2+) serves as cofactor.

Binds the 23S rRNA. The protein is Large ribosomal subunit protein bL31 of Colwellia psychrerythraea (strain 34H / ATCC BAA-681) (Vibrio psychroerythus).